Here is a 249-residue protein sequence, read N- to C-terminus: 5'-nucleotidase SurE 2 (249 aa).

A divalent metal cation is bound by residues Asp8, Asp9, Ser40, and Asn90.

This sequence belongs to the SurE nucleotidase family. The cofactor is a divalent metal cation.

It localises to the cytoplasm. It catalyses the reaction a ribonucleoside 5'-phosphate + H2O = a ribonucleoside + phosphate. In terms of biological role, nucleotidase that shows phosphatase activity on nucleoside 5'-monophosphates. This chain is 5'-nucleotidase SurE 2, found in Pyrobaculum aerophilum (strain ATCC 51768 / DSM 7523 / JCM 9630 / CIP 104966 / NBRC 100827 / IM2).